Reading from the N-terminus, the 381-residue chain is 5-cytosine rRNA methyltransferase NSUN4 (381 aa).

Residues 1–25 (MAAPVLRCVRKLLKLVDFTPVPRRY) constitute a mitochondrion transit peptide. S-adenosyl-L-methionine contacts are provided by glycine 182, glycine 183, lysine 184, and aspartate 201. Phosphoserine is present on serine 203. S-adenosyl-L-methionine-binding residues include arginine 206, aspartate 234, glycine 235, and aspartate 252. Cysteine 307 serves as the catalytic Nucleophile.

The protein belongs to the class I-like SAM-binding methyltransferase superfamily. RsmB/NOP family. Heterodimer with MTERFD2/MTERF4; this interaction seems to be required for NSUN4 recruitment to the mitochondrial large ribosomal subunit.

It localises to the mitochondrion. The catalysed reaction is a cytidine in rRNA + S-adenosyl-L-methionine = a 5-methylcytidine in rRNA + S-adenosyl-L-homocysteine + H(+). It carries out the reaction a cytidine in mRNA + S-adenosyl-L-methionine = a 5-methylcytidine in mRNA + S-adenosyl-L-homocysteine + H(+). Functionally, mitochondrial RNA cytosine C(5)-methyltransferase that methylates cytosine to 5-methylcytosine (m5C) in various RNAs, such as rRNAs, mRNAs and some long non-coding RNAs (lncRNAs). Involved in mitochondrial ribosome small subunit (SSU) maturation by catalyzing methylation of mitochondrial 12S rRNA; the function is independent of MTERFD2/MTERF4 and assembled mitochondrial ribosome large subunit (LSU). Targeted to LSU by MTERFD2/MTERF4 and probably is involved in a final step in ribosome biogenesis to ensure that SSU and LSU are assembled. In vitro can methylate 16S rRNA of the LSU; the methylation is enhanced by MTERFD/MTERF4. Also acts as a regulator of innate immunity by marking double-stranded mitochondrial RNAs(mt-dsRNAs) generated in response to stress: catalyzes m5C modification on mitochondrial RNAs, such as a mRNAs and lncRNAs, with a preference for the termini of light-strand lncRNAs, promoting their degradation and cytosolic release. Modified light-strand lncRNAs are then recognized by C1QBP reader and recruited to the mitochondrial degradosome complex, which promotes their degradation. In Mus musculus (Mouse), this protein is 5-cytosine rRNA methyltransferase NSUN4.